A 447-amino-acid polypeptide reads, in one-letter code: Methionine aminopeptidase 2 (447 aa).

Residues 1 to 86 form a disordered region; it reads MAGATEGEDT…KNKKKKKKKI (86 aa). Residues 8 to 32 show a composition bias toward basic and acidic residues; that stretch reads EDTKVIESKINELNIDKPKLEDNNE. The segment covering 43–60 has biased composition (acidic residues); that stretch reads GGDDDDDKEDDDDNDEIT. The span at 71-86 shows a compositional bias: basic residues; sequence KKKKKNKNKKKKKKKI. Substrate is bound at residue His-198. Residues Asp-218, Asp-229, and His-300 each coordinate a divalent metal cation. His-308 lines the substrate pocket. Glu-333 and Glu-428 together coordinate a divalent metal cation.

It belongs to the peptidase M24A family. Methionine aminopeptidase eukaryotic type 2 subfamily. Co(2+) serves as cofactor. It depends on Zn(2+) as a cofactor. Mn(2+) is required as a cofactor. Requires Fe(2+) as cofactor.

It is found in the cytoplasm. The catalysed reaction is Release of N-terminal amino acids, preferentially methionine, from peptides and arylamides.. Its function is as follows. Cotranslationally removes the N-terminal methionine from nascent proteins. The N-terminal methionine is often cleaved when the second residue in the primary sequence is small and uncharged (Met-Ala-, Cys, Gly, Pro, Ser, Thr, or Val). The protein is Methionine aminopeptidase 2 of Candida albicans (strain WO-1) (Yeast).